The chain runs to 78 residues: Large ribosomal subunit protein uL29 (78 aa).

The tract at residues 59-78 (VESERKRGKSLSSTQTQKEE) is disordered. Residues 68-78 (SLSSTQTQKEE) show a composition bias toward polar residues.

It belongs to the universal ribosomal protein uL29 family.

The protein is Large ribosomal subunit protein uL29 of Synechococcus sp. (strain JA-3-3Ab) (Cyanobacteria bacterium Yellowstone A-Prime).